Reading from the N-terminus, the 233-residue chain is uncharacterized protein (233 aa).

The chain crosses the membrane as a helical span at residues 21 to 41 (LNILIAIVSILIVVVAANLFI). The segment at 44–163 (PSSKDVSKDS…GEHAATYDSS (120 aa)) is disordered. Composition is skewed to basic and acidic residues over residues 48-57 (DVSKDSETAQ), 66-108 (KTEK…KKDD), and 135-144 (DVEKTYENPD).

Its subcellular location is the cell membrane. This is an uncharacterized protein from Bacillus subtilis (strain 168).